The chain runs to 320 residues: MRVEIDHRNSGGGKLRHPEKQHRPDNPIQRKPAWIRVKAPNHPVYHETRALMREAKLVTVCEEAACPNIGECWSQRHATMMIMGEICTRACAFCNVTTGQPAPLAADEPARVAEAVARLGLQHVVITSVDRDDLDDGGAAHFAAVIGAIRAAAPSTTIEILTPDFLRKPGALEVVVAARPDVFNHNLETVPRLYPSIRPGARYYQSLRLLDRVKQLDPSIFTKSGLMAGLGEDRGEVGQVMDDLRIADVDFLTIGQYLQPTVKHAAVDRFVTPDEFADLAAMARAKGFLMVSATPLTRSSYHADADFAALREARAARHAA.

The disordered stretch occupies residues 1–27 (MRVEIDHRNSGGGKLRHPEKQHRPDNP). The span at 16 to 25 (RHPEKQHRPD) shows a compositional bias: basic and acidic residues. [4Fe-4S] cluster contacts are provided by C61, C66, C72, C87, C91, C94, and S300. The Radical SAM core domain occupies 73–289 (WSQRHATMMI…AAMARAKGFL (217 aa)).

This sequence belongs to the radical SAM superfamily. Lipoyl synthase family. It depends on [4Fe-4S] cluster as a cofactor.

It localises to the cytoplasm. The enzyme catalyses [[Fe-S] cluster scaffold protein carrying a second [4Fe-4S](2+) cluster] + N(6)-octanoyl-L-lysyl-[protein] + 2 oxidized [2Fe-2S]-[ferredoxin] + 2 S-adenosyl-L-methionine + 4 H(+) = [[Fe-S] cluster scaffold protein] + N(6)-[(R)-dihydrolipoyl]-L-lysyl-[protein] + 4 Fe(3+) + 2 hydrogen sulfide + 2 5'-deoxyadenosine + 2 L-methionine + 2 reduced [2Fe-2S]-[ferredoxin]. Its pathway is protein modification; protein lipoylation via endogenous pathway; protein N(6)-(lipoyl)lysine from octanoyl-[acyl-carrier-protein]: step 2/2. Its function is as follows. Catalyzes the radical-mediated insertion of two sulfur atoms into the C-6 and C-8 positions of the octanoyl moiety bound to the lipoyl domains of lipoate-dependent enzymes, thereby converting the octanoylated domains into lipoylated derivatives. This is Lipoyl synthase from Acidiphilium cryptum (strain JF-5).